Reading from the N-terminus, the 487-residue chain is Complement C1r subcomponent-like protein (487 aa).

A signal peptide spans 1 to 35 (MPGPRVWGKYLWRSPHSKGCPGAMWWLLLWGVLQA). The 125-residue stretch at 39–163 (RGSVLLAQEL…KGFLALYQTV (125 aa)) folds into the CUB domain. Residues C94 and C112 are joined by a disulfide bond. N147 and N166 each carry an N-linked (GlcNAc...) asparagine glycan. In terms of domain architecture, Sushi spans 165–230 (VNYSQPISEA…DGEEVLQCMP (66 aa)). Cysteines 195 and 228 form a disulfide. An N-linked (GlcNAc...) (complex) asparagine glycan is attached at N242. The 240-residue stretch at 245–484 (TLGSSRAKLG…YVDWIKGVMN (240 aa)) folds into the Peptidase S1 domain. H283 acts as the Charge relay system in catalysis. The N-linked (GlcNAc...) asparagine glycan is linked to N296. D339 (charge relay system) is an active-site residue. N363 carries N-linked (GlcNAc...) asparagine glycosylation. Intrachain disulfides connect C402–C421 and C432–C462. S436 (charge relay system) is an active-site residue.

It belongs to the peptidase S1 family. Highly expressed in placenta, liver, kidney, pancreas, moderately in lung, spleen, prostate, ovary, colon, and PBL, and weakly in heart, skeletal muscle, thymus, testis, and small intestine. Expressed in PC-3 (prostate adenocarcinoma) and SK-OV-3 (ovary adenocarcinoma) cells, but not in LoVo and HT-29 (colon adenocarcinoma), SMMC7721 (hepatocellular carcinoma), CaoV-3 (ovary adenocarcinoma), HeLa (cervix epithelioid carcinoma), MCF-7 (breast adenocarcinoma), U-251MG (glioma) or A-549 (lung carcinoma) cells. Widely expressed in myeloid leukemia cell lines, including K-562 (chronic myelogenous leukemia), THP-1 (myelomonocytic leukemia), HL-60 and NB4 (promyelocytic leukemia), and KG-1 (acute myelogenous leukemia) cells. Expressed mainly in the liver and in serum (at protein level).

Its subcellular location is the secreted. Mediates the proteolytic cleavage of HP/haptoglobin in the endoplasmic reticulum. The chain is Complement C1r subcomponent-like protein (C1RL) from Homo sapiens (Human).